Consider the following 185-residue polypeptide: Ubiquitin-fold modifier-conjugating enzyme 1 (185 aa).

C119 acts as the Glycyl thioester intermediate in catalysis.

It belongs to the ubiquitin-conjugating enzyme family. UFC1 subfamily.

Its function is as follows. E2-like enzyme which forms an intermediate with UFM1 via a thioester linkage. The protein is Ubiquitin-fold modifier-conjugating enzyme 1 of Oryza sativa subsp. japonica (Rice).